The primary structure comprises 138 residues: uncharacterized protein (138 aa).

An N-terminal signal peptide occupies residues 1–37; that stretch reads MNSTFTSQPLLNRSEPRVFKEFYRLVIGCNPAWQVMA.

It to H.influenzae HI_1631.

This is an uncharacterized protein from Sinorhizobium fredii (strain NBRC 101917 / NGR234).